Consider the following 571-residue polypeptide: Transcription factor ABORTED MICROSPORES (571 aa).

Positions 275–284 (NDKDMNENGR) are enriched in basic and acidic residues. 3 disordered regions span residues 275–321 (NDKD…AERR), 365–390 (ELQD…MSLN), and 536–571 (DDHQ…YHNQ). The bHLH domain maps to 310 to 359 (GSQAKNLMAERRRRKKLNDRLYALRSLVPRITKLDRASILGDAINYVKEL). Residues 368–378 (DELEENSETED) show a composition bias toward acidic residues. Polar residues predominate over residues 381 to 390 (NRPQGGMSLN). Positions 556 to 571 (AHHHHHHQHINHYHNQ) are enriched in basic residues.

Homodimer. Interacts with ASHR3. As to expression, mostly expressed in closed, post-meiotic buds, and, to a lower extent, in pre-meiotic buds. Detected in leaves, stems, and flowers.

Its subcellular location is the nucleus. Transcription factor. Plays a crucial role in tapetum development. Required for male fertility and pollen differentiation, especially during the post-meiotic transcriptional regulation of microspore development within the developing anther. Binds E-box regions in the AHL16/TEK promoter. This chain is Transcription factor ABORTED MICROSPORES (AMS), found in Arabidopsis thaliana (Mouse-ear cress).